The chain runs to 214 residues: Pyridoxine/pyridoxamine 5'-phosphate oxidase (214 aa).

Substrate-binding positions include 8-11 (RKSY) and lysine 67. FMN contacts are provided by residues 62 to 67 (RVVLLK), 77 to 78 (YT), lysine 84, and glutamine 106. The substrate site is built by tyrosine 124, arginine 128, and serine 132. Residues 141–142 (QS) and tryptophan 186 each bind FMN. 192-194 (RLH) is a binding site for substrate. Arginine 196 contacts FMN.

The protein belongs to the pyridoxamine 5'-phosphate oxidase family. Homodimer. FMN is required as a cofactor.

The enzyme catalyses pyridoxamine 5'-phosphate + O2 + H2O = pyridoxal 5'-phosphate + H2O2 + NH4(+). It carries out the reaction pyridoxine 5'-phosphate + O2 = pyridoxal 5'-phosphate + H2O2. Its pathway is cofactor metabolism; pyridoxal 5'-phosphate salvage; pyridoxal 5'-phosphate from pyridoxamine 5'-phosphate: step 1/1. It functions in the pathway cofactor metabolism; pyridoxal 5'-phosphate salvage; pyridoxal 5'-phosphate from pyridoxine 5'-phosphate: step 1/1. Functionally, catalyzes the oxidation of either pyridoxine 5'-phosphate (PNP) or pyridoxamine 5'-phosphate (PMP) into pyridoxal 5'-phosphate (PLP). The protein is Pyridoxine/pyridoxamine 5'-phosphate oxidase of Flavobacterium psychrophilum (strain ATCC 49511 / DSM 21280 / CIP 103535 / JIP02/86).